The sequence spans 216 residues: Uracil-DNA glycosylase (216 aa).

The Proton acceptor role is filled by Asp60.

It belongs to the uracil-DNA glycosylase (UDG) superfamily. UNG family.

The protein resides in the cytoplasm. It catalyses the reaction Hydrolyzes single-stranded DNA or mismatched double-stranded DNA and polynucleotides, releasing free uracil.. Its function is as follows. Excises uracil residues from the DNA which can arise as a result of misincorporation of dUMP residues by DNA polymerase or due to deamination of cytosine. This is Uracil-DNA glycosylase from Psychromonas ingrahamii (strain DSM 17664 / CCUG 51855 / 37).